The sequence spans 225 residues: Endoglucanase (225 aa).

The first 15 residues, M1–N15, serve as a signal peptide directing secretion. D29 serves as the catalytic Nucleophile. Cystine bridges form between C30/C152, C31/C66, C35/C103, C50/C74, C104/C219, C106/C209, and C176/C187. An N-linked (GlcNAc...) asparagine glycan is attached at N55. D138 functions as the Proton donor in the catalytic mechanism.

Belongs to the glycosyl hydrolase 45 (cellulase K) family. N- and O-glycosylated. Contains hybrid- and complex-type N-glycans.

It localises to the secreted. It carries out the reaction Endohydrolysis of (1-&gt;4)-beta-D-glucosidic linkages in cellulose, lichenin and cereal beta-D-glucans.. With respect to regulation, activity is not affected by metal ions except Mn(2+), which reduces the activity by 40-50%. However, no significant change in activity in response to 1 mM EDTA. In terms of biological role, hydrolyzes carboxymethylcellulose (CMC). Also hydrolyzes lichenan and barley beta-1,4-D-glucan. CMC is hydrolyzed majorily to cellobiose (G2), cellotriose (G3) and cellotetraose (G4). Cellohexaose (G6) is hydrolyzed to G4 and G2 with traces of G3. Cellopentaose (G5) is completely hydrolyzed to G2 and G3, and G4 is partially hydrolyzed to G2. Does not hydrolyze G2 or G3. Does not hydrolyze crystalline cellulose, soluble starch, xylan, mannan or laminarin. The protein is Endoglucanase of Cryptopygus antarcticus (Antarctic springtail).